Consider the following 514-residue polypeptide: 2-isopropylmalate synthase (514 aa).

Residues 5 to 268 (LIIFDTTLRD…DVGIDTTQIV (264 aa)) enclose the Pyruvate carboxyltransferase domain. Mn(2+) contacts are provided by Asp-14, His-202, His-204, and Asn-239. Residues 395–514 (KFVSLSQRSE…KDDKLNPQRA (120 aa)) are regulatory domain.

This sequence belongs to the alpha-IPM synthase/homocitrate synthase family. LeuA type 1 subfamily. As to quaternary structure, homodimer. Requires Mn(2+) as cofactor.

The protein localises to the cytoplasm. The catalysed reaction is 3-methyl-2-oxobutanoate + acetyl-CoA + H2O = (2S)-2-isopropylmalate + CoA + H(+). Its pathway is amino-acid biosynthesis; L-leucine biosynthesis; L-leucine from 3-methyl-2-oxobutanoate: step 1/4. In terms of biological role, catalyzes the condensation of the acetyl group of acetyl-CoA with 3-methyl-2-oxobutanoate (2-ketoisovalerate) to form 3-carboxy-3-hydroxy-4-methylpentanoate (2-isopropylmalate). This chain is 2-isopropylmalate synthase, found in Burkholderia cenocepacia (strain HI2424).